The primary structure comprises 336 residues: Small ribosomal subunit protein uS2 (336 aa).

This sequence belongs to the universal ribosomal protein uS2 family.

This chain is Small ribosomal subunit protein uS2, found in Beijerinckia indica subsp. indica (strain ATCC 9039 / DSM 1715 / NCIMB 8712).